We begin with the raw amino-acid sequence, 118 residues long: NADH-ubiquinone oxidoreductase chain 3 (118 aa).

A run of 3 helical transmembrane segments spans residues 9–29, 62–82, and 87–107; these read IYLV…FLFA, LVSI…PWAV, and IDLF…IGFL.

This sequence belongs to the complex I subunit 3 family.

It localises to the mitochondrion membrane. The catalysed reaction is a ubiquinone + NADH + 5 H(+)(in) = a ubiquinol + NAD(+) + 4 H(+)(out). In terms of biological role, core subunit of the mitochondrial membrane respiratory chain NADH dehydrogenase (Complex I) that is believed to belong to the minimal assembly required for catalysis. Complex I functions in the transfer of electrons from NADH to the respiratory chain. The immediate electron acceptor for the enzyme is believed to be ubiquinone. The polypeptide is NADH-ubiquinone oxidoreductase chain 3 (NAD3) (Pinus sylvestris (Scotch pine)).